The following is a 555-amino-acid chain: Urocanate hydratase (555 aa).

NAD(+) is bound by residues glycine 52 to glycine 53, glutamine 130, glycine 176 to glycine 178, glutamate 196, arginine 201, asparagine 242 to alanine 243, glutamine 263 to histidine 267, tyrosine 272 to leucine 273, and tyrosine 321. Residue cysteine 409 is part of the active site. Residue glycine 491 participates in NAD(+) binding.

The protein belongs to the urocanase family. NAD(+) serves as cofactor.

It localises to the cytoplasm. The enzyme catalyses 4-imidazolone-5-propanoate = trans-urocanate + H2O. Its pathway is amino-acid degradation; L-histidine degradation into L-glutamate; N-formimidoyl-L-glutamate from L-histidine: step 2/3. Its function is as follows. Catalyzes the conversion of urocanate to 4-imidazolone-5-propionate. This Nocardioides sp. (strain ATCC BAA-499 / JS614) protein is Urocanate hydratase.